The sequence spans 64 residues: Large ribosomal subunit protein bL35 (64 aa).

Residues 1–26 show a composition bias toward basic residues; it reads MPKMKSHRGASKRFKRTASGKLKRGR. 2 disordered regions span residues 1-28 and 33-52; these read MPKM…GRAY and FGNK…MVSS.

Belongs to the bacterial ribosomal protein bL35 family.

This is Large ribosomal subunit protein bL35 from Exiguobacterium sibiricum (strain DSM 17290 / CCUG 55495 / CIP 109462 / JCM 13490 / 255-15).